Consider the following 454-residue polypeptide: ESX-1 secretion-associated protein EspB (454 aa).

Disordered stretches follow at residues 17 to 40, 82 to 128, and 391 to 454; these read RADEVEAPMATPPTDVPQAPSGLT, GEVE…AGES, and AGQG…QDNK. Residues 391 to 422 show a composition bias toward gly residues; that stretch reads AGQGGGAAGRGMAGGGMGMPMGGAGQGQGGAK.

It belongs to the EspB family. Cleaved at close to the C-terminus during secretion.

It is found in the secreted. The chain is ESX-1 secretion-associated protein EspB from Mycobacterium marinum (strain ATCC BAA-535 / M).